Consider the following 73-residue polypeptide: DNA-directed RNA polymerase subunit omega (73 aa).

It belongs to the RNA polymerase subunit omega family. In terms of assembly, the RNAP catalytic core consists of 2 alpha, 1 beta, 1 beta' and 1 omega subunit. When a sigma factor is associated with the core the holoenzyme is formed, which can initiate transcription.

It carries out the reaction RNA(n) + a ribonucleoside 5'-triphosphate = RNA(n+1) + diphosphate. Promotes RNA polymerase assembly. Latches the N- and C-terminal regions of the beta' subunit thereby facilitating its interaction with the beta and alpha subunits. This Oleidesulfovibrio alaskensis (strain ATCC BAA-1058 / DSM 17464 / G20) (Desulfovibrio alaskensis) protein is DNA-directed RNA polymerase subunit omega.